The primary structure comprises 364 residues: Lipoyl synthase, mitochondrial (364 aa).

[4Fe-4S] cluster is bound by residues Cys99, Cys104, Cys110, Cys130, Cys134, Cys137, and Ser345. The Radical SAM core domain occupies 116–334 (HSTQTATIML…EQRGNELGFL (219 aa)).

This sequence belongs to the radical SAM superfamily. Lipoyl synthase family. It depends on [4Fe-4S] cluster as a cofactor.

The protein localises to the mitochondrion. It catalyses the reaction [[Fe-S] cluster scaffold protein carrying a second [4Fe-4S](2+) cluster] + N(6)-octanoyl-L-lysyl-[protein] + 2 oxidized [2Fe-2S]-[ferredoxin] + 2 S-adenosyl-L-methionine + 4 H(+) = [[Fe-S] cluster scaffold protein] + N(6)-[(R)-dihydrolipoyl]-L-lysyl-[protein] + 4 Fe(3+) + 2 hydrogen sulfide + 2 5'-deoxyadenosine + 2 L-methionine + 2 reduced [2Fe-2S]-[ferredoxin]. The protein operates within protein modification; protein lipoylation via endogenous pathway; protein N(6)-(lipoyl)lysine from octanoyl-[acyl-carrier-protein]: step 2/2. Its function is as follows. Catalyzes the radical-mediated insertion of two sulfur atoms into the C-6 and C-8 positions of the octanoyl moiety bound to the lipoyl domains of lipoate-dependent enzymes, thereby converting the octanoylated domains into lipoylated derivatives. This is Lipoyl synthase, mitochondrial from Drosophila mojavensis (Fruit fly).